The following is a 134-amino-acid chain: MTISLGFVIAEFNRDLTYQMELLGREHAEFLGATVKETILVPGVFDMPLAIKKLCQREDIDAVVTIGSVIEGETDHDQVVMQHAARKIMDLSLEFNKPVTLGIPGPGMTRMAAHERVDYAKRAVEAAVKLVRRL.

5-amino-6-(D-ribitylamino)uracil-binding positions include Phe12, 44–46, and 68–70; these read VFD and SVI. A (2S)-2-hydroxy-3-oxobutyl phosphate-binding site is contributed by 73–74; sequence ET. The active-site Proton donor is the His76. Leu101 contacts 5-amino-6-(D-ribitylamino)uracil. Arg116 lines the (2S)-2-hydroxy-3-oxobutyl phosphate pocket.

Belongs to the DMRL synthase family.

It carries out the reaction (2S)-2-hydroxy-3-oxobutyl phosphate + 5-amino-6-(D-ribitylamino)uracil = 6,7-dimethyl-8-(1-D-ribityl)lumazine + phosphate + 2 H2O + H(+). It functions in the pathway cofactor biosynthesis; riboflavin biosynthesis; riboflavin from 2-hydroxy-3-oxobutyl phosphate and 5-amino-6-(D-ribitylamino)uracil: step 1/2. In terms of biological role, catalyzes the formation of 6,7-dimethyl-8-ribityllumazine by condensation of 5-amino-6-(D-ribitylamino)uracil with 3,4-dihydroxy-2-butanone 4-phosphate. This is the penultimate step in the biosynthesis of riboflavin. This is 6,7-dimethyl-8-ribityllumazine synthase from Methanosarcina acetivorans (strain ATCC 35395 / DSM 2834 / JCM 12185 / C2A).